Here is a 327-residue protein sequence, read N- to C-terminus: Glycerol-3-phosphate dehydrogenase [NAD(P)+] (327 aa).

4 residues coordinate NADPH: S10, F11, R31, and K108. Positions 108, 136, and 138 each coordinate sn-glycerol 3-phosphate. Residue A140 coordinates NADPH. Residues K191, D246, S256, R257, and N258 each coordinate sn-glycerol 3-phosphate. K191 acts as the Proton acceptor in catalysis. Residue R257 coordinates NADPH. The NADPH site is built by L281 and E283.

It belongs to the NAD-dependent glycerol-3-phosphate dehydrogenase family.

The protein localises to the cytoplasm. It carries out the reaction sn-glycerol 3-phosphate + NAD(+) = dihydroxyacetone phosphate + NADH + H(+). The catalysed reaction is sn-glycerol 3-phosphate + NADP(+) = dihydroxyacetone phosphate + NADPH + H(+). It participates in membrane lipid metabolism; glycerophospholipid metabolism. Catalyzes the reduction of the glycolytic intermediate dihydroxyacetone phosphate (DHAP) to sn-glycerol 3-phosphate (G3P), the key precursor for phospholipid synthesis. The sequence is that of Glycerol-3-phosphate dehydrogenase [NAD(P)+] from Ehrlichia ruminantium (strain Welgevonden).